The following is a 931-amino-acid chain: ORF4 polyprotein (931 aa).

Post-translationally, proteolytic processing of ORF4 polyprotein yields the VP4a, VP4b and VP4c capsid proteins.

The protein localises to the virion. In terms of biological role, ORF4 polyprotein codes for VP4a, VP4b, and VP4c, three of the four proteins that self-assemble to form the icosahedral capsid. The capsid is made of VP3 (coded by ORF3), VP4a, VP4b and VP4c. The polypeptide is ORF4 polyprotein (Drosophila melanogaster (Fruit fly)).